The chain runs to 491 residues: Delayed-rectifier potassium channel regulatory subunit KCNS3 (491 aa).

Over 1–182 (MVFGEFFHRP…IRMENPAYCL (182 aa)) the chain is Cytoplasmic. A helical membrane pass occupies residues 183 to 204 (SAKLIAISSLSVVLASIVAMCV). Residues 205–220 (HSMSEFQNEDGEVDDP) lie on the Extracellular side of the membrane. Residues 221 to 243 (VLEGVEIACIAWFTGELAIRLVA) traverse the membrane as a helical segment. Residues 244–254 (APSQKKFWKNP) are Cytoplasmic-facing. The helical transmembrane segment at 255 to 275 (LNIIDFVSIIPFYATLAVDTK) threads the bilayer. Residues 276-285 (EEESEDIENM) are Extracellular-facing. Residues 286-306 (GKVVQILRLMRIFRILKLARH) traverse the membrane as a helical; Voltage-sensor segment. The Cytoplasmic segment spans residues 307 to 321 (SVGLRSLGATLRHSY). A helical membrane pass occupies residues 322–343 (HEVGLLLLFLSVGISIFSVLIY). Residues 344 to 357 (SVEKDEHKSSLTSI) lie on the Extracellular side of the membrane. An intramembrane region (helical) is located at residues 358-369 (PICWWWATISMT). Positions 370–375 (TVGYGD) match the Selectivity filter motif. An intramembrane segment occupies 370-377 (TVGYGDTH). Residues 378–384 (PVTLAGK) are Extracellular-facing. Residues 385 to 413 (IIASTCIICGILVVALPITIIFNKFSKYY) traverse the membrane as a helical segment. The Cytoplasmic portion of the chain corresponds to 414-491 (QKQKDMEVDQ…TASLENCTGK (78 aa)).

It belongs to the potassium channel family. S (TC 1.A.1.2) subfamily. Kv9.3/KCNS3 sub-subfamily. In terms of assembly, heterotetramer with KCNB1. Does not form homomultimers.

The protein localises to the cell membrane. Its function is as follows. Potassium channel regulatory subunit that modulates the delayed rectifier potassium channel activity of KCNB1 by namely slowing down the deactivation and inactivation time constants. While it does not form functional channel on its own, it can form functional heterotetrameric channels with KCNB1. This is Delayed-rectifier potassium channel regulatory subunit KCNS3 from Mus musculus (Mouse).